The primary structure comprises 369 residues: Anhydro-N-acetylmuramic acid kinase (369 aa).

Residue glycine 12–aspartate 19 participates in ATP binding.

This sequence belongs to the anhydro-N-acetylmuramic acid kinase family.

It catalyses the reaction 1,6-anhydro-N-acetyl-beta-muramate + ATP + H2O = N-acetyl-D-muramate 6-phosphate + ADP + H(+). The protein operates within amino-sugar metabolism; 1,6-anhydro-N-acetylmuramate degradation. Its pathway is cell wall biogenesis; peptidoglycan recycling. Catalyzes the specific phosphorylation of 1,6-anhydro-N-acetylmuramic acid (anhMurNAc) with the simultaneous cleavage of the 1,6-anhydro ring, generating MurNAc-6-P. Is required for the utilization of anhMurNAc either imported from the medium or derived from its own cell wall murein, and thus plays a role in cell wall recycling. In Shewanella loihica (strain ATCC BAA-1088 / PV-4), this protein is Anhydro-N-acetylmuramic acid kinase.